Here is a 359-residue protein sequence, read N- to C-terminus: N-acetyl-gamma-glutamyl-phosphate reductase (359 aa).

The active site involves Cys162.

It belongs to the NAGSA dehydrogenase family. Type 1 subfamily.

The protein localises to the cytoplasm. It carries out the reaction N-acetyl-L-glutamate 5-semialdehyde + phosphate + NADP(+) = N-acetyl-L-glutamyl 5-phosphate + NADPH + H(+). It functions in the pathway amino-acid biosynthesis; L-arginine biosynthesis; N(2)-acetyl-L-ornithine from L-glutamate: step 3/4. In terms of biological role, catalyzes the NADPH-dependent reduction of N-acetyl-5-glutamyl phosphate to yield N-acetyl-L-glutamate 5-semialdehyde. The polypeptide is N-acetyl-gamma-glutamyl-phosphate reductase (Prochlorococcus marinus (strain NATL1A)).